A 206-amino-acid chain; its full sequence is Thymidylate kinase (206 aa).

Glycine 10–serine 17 serves as a coordination point for ATP.

The protein belongs to the thymidylate kinase family.

The enzyme catalyses dTMP + ATP = dTDP + ADP. Functionally, phosphorylation of dTMP to form dTDP in both de novo and salvage pathways of dTTP synthesis. The sequence is that of Thymidylate kinase (tmk) from Neisseria meningitidis serogroup B (strain ATCC BAA-335 / MC58).